Reading from the N-terminus, the 370-residue chain is Dual-specificity RNA methyltransferase RlmN (370 aa).

Catalysis depends on glutamate 93, which acts as the Proton acceptor. The region spanning 99–337 is the Radical SAM core domain; sequence EEGRGTLCVS…VTTVRKTRGD (239 aa). Cysteine 106 and cysteine 343 are disulfide-bonded. Residues cysteine 113, cysteine 117, and cysteine 120 each coordinate [4Fe-4S] cluster. S-adenosyl-L-methionine is bound by residues 167–168, serine 199, 221–223, and asparagine 300; these read GE and SLH. The S-methylcysteine intermediate role is filled by cysteine 343.

The protein belongs to the radical SAM superfamily. RlmN family. It depends on [4Fe-4S] cluster as a cofactor.

It is found in the cytoplasm. The enzyme catalyses adenosine(2503) in 23S rRNA + 2 reduced [2Fe-2S]-[ferredoxin] + 2 S-adenosyl-L-methionine = 2-methyladenosine(2503) in 23S rRNA + 5'-deoxyadenosine + L-methionine + 2 oxidized [2Fe-2S]-[ferredoxin] + S-adenosyl-L-homocysteine. The catalysed reaction is adenosine(37) in tRNA + 2 reduced [2Fe-2S]-[ferredoxin] + 2 S-adenosyl-L-methionine = 2-methyladenosine(37) in tRNA + 5'-deoxyadenosine + L-methionine + 2 oxidized [2Fe-2S]-[ferredoxin] + S-adenosyl-L-homocysteine. Specifically methylates position 2 of adenine 2503 in 23S rRNA and position 2 of adenine 37 in tRNAs. m2A2503 modification seems to play a crucial role in the proofreading step occurring at the peptidyl transferase center and thus would serve to optimize ribosomal fidelity. In Francisella tularensis subsp. holarctica (strain LVS), this protein is Dual-specificity RNA methyltransferase RlmN.